A 187-amino-acid chain; its full sequence is UPF0301 protein Sala_0165 (187 aa).

This sequence belongs to the UPF0301 (AlgH) family.

The protein is UPF0301 protein Sala_0165 of Sphingopyxis alaskensis (strain DSM 13593 / LMG 18877 / RB2256) (Sphingomonas alaskensis).